The sequence spans 581 residues: Eukaryotic translation initiation factor 2A (581 aa).

N-acetylmethionine is present on Met1. Ala2 is subject to N-acetylalanine; in Eukaryotic translation initiation factor 2A, N-terminally processed. Phosphothreonine is present on Thr5. 3 WD repeats span residues 23–63, 125–163, and 356–401; these read PHFT…NIIN, QKKMQNWCPSWSDDEIICARNVNNEVHFFENNNFNTIAN, and VASD…HKYD. Residues 432-533 form a disordered region; that stretch reads PSEVPSEEPK…SGDPEVDKKI (102 aa). The segment covering 494 to 503 has biased composition (basic and acidic residues); it reads KKAAKQEARS. A phosphoserine mark is found at Ser503, Ser513, and Ser522. The span at 514–524 shows a compositional bias: polar residues; it reads APRNTVTQSAS. The stretch at 527 to 578 forms a coiled coil; it reads PEVDKKIKNLKKKLKAIEQLKEQAAAGKQLEKNQLEKIQKETALLQELEDLE.

This sequence belongs to the WD repeat EIF2A family.

Functionally, functions in the early steps of protein synthesis of a small number of specific mRNAs. Acts by directing the binding of methionyl-tRNAi to 40S ribosomal subunits. In contrast to the eIF-2 complex, it binds methionyl-tRNAi to 40S subunits in a codon-dependent manner, whereas the eIF-2 complex binds methionyl-tRNAi to 40S subunits in a GTP-dependent manner. The protein is Eukaryotic translation initiation factor 2A (Eif2a) of Mus musculus (Mouse).